The sequence spans 705 residues: MGTEEKMTRSDIDLNEPAFYNNRELSWLAFNERVLEEAIDERNPLLERLKFLAIFSSNLDEFFMVRVAGLKDQVKAGFNKPENKAGLTPKQQLRQISERNHQLVQLQDRVYTETIIPMLSQHGIQFLTFDELSDKQRSFLEKRFDHYIFPVLTPMAVDAYRPFPMLLNKSLNLAVVIKNKESDSREQLAIVQVPSVLNRFILLPCEDGKNQFILLENVISYFIEKLFKGYTVKSVSPFRITRNADLPIHEEGARDLLREIEKELKKRKWGAAVRLEMQEGLMDPNVLKLLLDVLEIHKNDVYSLQGPLDLTFLFKLYNRLIVDYEHLTNETLIPQPPEDLIGETNIFDAILKRDIFLHHPYESFQPVIDFIATAAEDPQVLAIKQTLYRVSGDSPIINALARAAENGKQVTVLVELKARFDEENNIQWAKKLEKSGVHVIYGITGLKTHSKITLVVRHHNDEIQRFVHLGTGNYNDSTAKLYTDMGLLTADEEFGIDATNFFNHLSGYSEKPQWHHLSTAPFEIRDTFLDLIDQEIECHKQNGNGHIIAKMNSLTDKPIILKLYEASRAGVRIELIVRGICCLRPGIPNVSEHIRVFSIVDRFLEHSRIFYFHHGGDDKVFLSSADWMTRNMEKRIEILFPIYQQSTKRRIIEILTITLLDNMKAREQNQFGQYRYVKRNPSEQPVQSQLTFFDMASRFSDSEAE.

Residue asparagine 58 participates in ATP binding. Arginine 389 and arginine 419 together coordinate Mg(2+). Histidine 449 acts as the Phosphohistidine intermediate in catalysis. Positions 482, 578, and 606 each coordinate ATP.

It belongs to the polyphosphate kinase 1 (PPK1) family. The cofactor is Mg(2+). Post-translationally, an intermediate of this reaction is the autophosphorylated ppk in which a phosphate is covalently linked to a histidine residue through a N-P bond.

The enzyme catalyses [phosphate](n) + ATP = [phosphate](n+1) + ADP. Catalyzes the reversible transfer of the terminal phosphate of ATP to form a long-chain polyphosphate (polyP). This is Polyphosphate kinase from Halalkalibacterium halodurans (strain ATCC BAA-125 / DSM 18197 / FERM 7344 / JCM 9153 / C-125) (Bacillus halodurans).